Here is a 375-residue protein sequence, read N- to C-terminus: Probable G-protein coupled receptor 27 (375 aa).

At Met1 to Ala23 the chain is on the extracellular side. N-linked (GlcNAc...) asparagine glycosylation occurs at Asn3. A helical transmembrane segment spans residues Thr24–Val44. The Cytoplasmic portion of the chain corresponds to Arg45–Tyr55. The chain crosses the membrane as a helical span at residues Leu56–Met76. Residues Leu77–Leu97 lie on the Extracellular side of the membrane. Cys95 and Cys171 are disulfide-bonded. Residues Leu98 to Val118 traverse the membrane as a helical segment. Topologically, residues Thr119 to Cys139 are cytoplasmic. A helical transmembrane segment spans residues Ala140–Leu160. The Extracellular segment spans residues Asp161–Pro181. The helical transmembrane segment at Gly182–Leu202 threads the bilayer. Over Arg203–Met285 the chain is Cytoplasmic. The chain crosses the membrane as a helical span at residues Phe286–Leu306. Over Arg307–Leu320 the chain is Extracellular. Residues Thr321–Phe341 traverse the membrane as a helical segment. Over Asn342 to Leu375 the chain is Cytoplasmic.

Belongs to the G-protein coupled receptor 1 family. In terms of tissue distribution, highly expressed as a 3.0 kb transcript in brain, ovary, testis, heart, prostate and peripheral Leukocytes. Lower levels in pancreas and small intestine. A 2.3 kb transcript was also found in peripheral Leukocytes. In brain regions, detected as a 3.0 kb transcript in all regions tested. Highest levels in the caudate nucleus, putamen, hippocampus and subthalamic nucleus. Lowest level in the cerebellum.

It localises to the cell membrane. Functionally, orphan receptor. Possible candidate for amine-like G-protein coupled receptor. This chain is Probable G-protein coupled receptor 27 (GPR27), found in Homo sapiens (Human).